A 419-amino-acid chain; its full sequence is MLNHFPGHCSNNIFCFPPIESETKSGKKASWIICVQVVQHNTIIPITDEMFSTDVKDAVAEIFTKFFVEEGTVRISKMTRITEGKNLGKKNATTVVHQAFKDALSKYNRHARQKRGAHTNRGMIPPMLVKYFNIIPKTFFEEETDPIVQRKRNGVRAVACQQGDGSILLYSRTEKEFLGLDNIKKELKQLYLFIDVRVYLDGELYLHRKPLQWIAGQANAKTDSSELHFYVFDCFWSDQLQMPSNKRQQLLTNIFKQKEDLTFIHQVENFSVKNEDEALRLKAQFIKEGYEGAIVRNVNGPYEPGYNNYHSAHLAKLKPLLDAEFILVDYTQGKKGKDLGAILWVCELPNKKRFVVTPKHLTYADRYALFQKLTPALFKKHLYGKELTVEYAELSPKTGIPLQARAVGFREPINVLEII.

The NTD stretch occupies residues 1-120 (MLNHFPGHCS…ARQKRGAHTN (120 aa)). The segment at 121 to 317 (RGMIPPMLVK…NYHSAHLAKL (197 aa)) is AD domain. The active-site N6-AMP-lysine intermediate is lysine 151. ATP-binding residues include lysine 151, glutamate 203, and phenylalanine 232. Position 203 (glutamate 203) interacts with a divalent metal cation. Glutamate 291 provides a ligand contact to a divalent metal cation. 2 residues coordinate ATP: isoleucine 294 and lysine 316. The interval 318 to 419 (KPLLDAEFIL…REPINVLEII (102 aa)) is OB domain.

It belongs to the ATP-dependent DNA ligase family.

It localises to the virion. It carries out the reaction ATP + (deoxyribonucleotide)n-3'-hydroxyl + 5'-phospho-(deoxyribonucleotide)m = (deoxyribonucleotide)n+m + AMP + diphosphate.. Very low-fidelity DNA ligase that seals nicks in double-stranded DNA during DNA repair. Together with the viral repair DNA polymerase X, fills the single nucleotide gaps generated by the AP endonuclease. It is not essential for viral replication and recombination. Displays a very low adenylation activity towards DNA with 3'-dideoxy- or 3'-amino-terminated nicks compared to regular nick DNA. The chain is DNA ligase from African swine fever virus (isolate Tick/South Africa/Pretoriuskop Pr4/1996) (ASFV).